Here is a 318-residue protein sequence, read N- to C-terminus: Methionyl-tRNA formyltransferase (318 aa).

110-113 (SLLP) serves as a coordination point for (6S)-5,6,7,8-tetrahydrofolate.

Belongs to the Fmt family.

It catalyses the reaction L-methionyl-tRNA(fMet) + (6R)-10-formyltetrahydrofolate = N-formyl-L-methionyl-tRNA(fMet) + (6S)-5,6,7,8-tetrahydrofolate + H(+). Attaches a formyl group to the free amino group of methionyl-tRNA(fMet). The formyl group appears to play a dual role in the initiator identity of N-formylmethionyl-tRNA by promoting its recognition by IF2 and preventing the misappropriation of this tRNA by the elongation apparatus. The sequence is that of Methionyl-tRNA formyltransferase from Geobacillus sp. (strain WCH70).